Here is a 480-residue protein sequence, read N- to C-terminus: Thiamine biosynthesis bifunctional protein ThiM/ThiE (480 aa).

The tract at residues 1–287 (MSTLPERVRE…LYVLVSGATP (287 aa)) is hydroxyethylthiazole kinase. A 5-(2-hydroxyethyl)-4-methylthiazole-binding site is contributed by M40. Positions 116 and 164 each coordinate ATP. 5-(2-hydroxyethyl)-4-methylthiazole is bound at residue G191. The interval 288 to 480 (PDVLEAVLQA…VRRAKGEVSA (193 aa)) is thiamine-phosphate synthase. 4-amino-2-methyl-5-(diphosphooxymethyl)pyrimidine is bound by residues 303–307 (QFREK) and N335. Residues D336 and D355 each coordinate Mg(2+). T374 provides a ligand contact to 4-amino-2-methyl-5-(diphosphooxymethyl)pyrimidine. 400–402 (TPS) is a 2-[(2R,5Z)-2-carboxy-4-methylthiazol-5(2H)-ylidene]ethyl phosphate binding site. K403 is a 4-amino-2-methyl-5-(diphosphooxymethyl)pyrimidine binding site. 2-[(2R,5Z)-2-carboxy-4-methylthiazol-5(2H)-ylidene]ethyl phosphate is bound by residues G431 and 451 to 452 (IS).

It in the N-terminal section; belongs to the Thz kinase family. In the C-terminal section; belongs to the thiamine-phosphate synthase family. Mg(2+) is required as a cofactor.

The enzyme catalyses 5-(2-hydroxyethyl)-4-methylthiazole + ATP = 4-methyl-5-(2-phosphooxyethyl)-thiazole + ADP + H(+). It catalyses the reaction 2-[(2R,5Z)-2-carboxy-4-methylthiazol-5(2H)-ylidene]ethyl phosphate + 4-amino-2-methyl-5-(diphosphooxymethyl)pyrimidine + 2 H(+) = thiamine phosphate + CO2 + diphosphate. The catalysed reaction is 2-(2-carboxy-4-methylthiazol-5-yl)ethyl phosphate + 4-amino-2-methyl-5-(diphosphooxymethyl)pyrimidine + 2 H(+) = thiamine phosphate + CO2 + diphosphate. It carries out the reaction 4-methyl-5-(2-phosphooxyethyl)-thiazole + 4-amino-2-methyl-5-(diphosphooxymethyl)pyrimidine + H(+) = thiamine phosphate + diphosphate. The protein operates within cofactor biosynthesis; thiamine diphosphate biosynthesis; 4-methyl-5-(2-phosphoethyl)-thiazole from 5-(2-hydroxyethyl)-4-methylthiazole: step 1/1. It participates in cofactor biosynthesis; thiamine diphosphate biosynthesis; thiamine phosphate from 4-amino-2-methyl-5-diphosphomethylpyrimidine and 4-methyl-5-(2-phosphoethyl)-thiazole: step 1/1. Condenses 4-methyl-5-(beta-hydroxyethyl)thiazole monophosphate (THZ-P) and 2-methyl-4-amino-5-hydroxymethyl pyrimidine pyrophosphate (HMP-PP) to form thiamine monophosphate (TMP). This is Thiamine biosynthesis bifunctional protein ThiM/ThiE (thiM/thiE) from Symbiobacterium thermophilum (strain DSM 24528 / JCM 14929 / IAM 14863 / T).